A 168-amino-acid chain; its full sequence is Photosystem I assembly protein Ycf3 (168 aa).

TPR repeat units follow at residues 35–68, 72–105, and 120–153; these read AFTYYRDGMSAQSEGNYAEALQNYYEAMRLEIDP, SYILYNIGLIHTSNGEHTKALEYYFRALERNPFL, and GEQAIRQGDSEIAEAWFDQAAEYWKQAIALTPGN.

It belongs to the Ycf3 family.

Its subcellular location is the plastid. The protein localises to the chloroplast thylakoid membrane. Its function is as follows. Essential for the assembly of the photosystem I (PSI) complex. May act as a chaperone-like factor to guide the assembly of the PSI subunits. This chain is Photosystem I assembly protein Ycf3, found in Oenothera elata subsp. hookeri (Hooker's evening primrose).